A 44-amino-acid chain; its full sequence is DNA-directed RNA polymerase subunit Rpo12 (44 aa).

Zn(2+) is bound by residues C8, C22, and C25.

It belongs to the archaeal Rpo12/eukaryotic RPC10 RNA polymerase subunit family. In terms of assembly, part of the RNA polymerase complex. Zn(2+) is required as a cofactor.

The protein resides in the cytoplasm. The catalysed reaction is RNA(n) + a ribonucleoside 5'-triphosphate = RNA(n+1) + diphosphate. Functionally, DNA-dependent RNA polymerase (RNAP) catalyzes the transcription of DNA into RNA using the four ribonucleoside triphosphates as substrates. This is DNA-directed RNA polymerase subunit Rpo12 from Halobacterium salinarum (strain ATCC 29341 / DSM 671 / R1).